Reading from the N-terminus, the 121-residue chain is Large ribosomal subunit protein uL18 (121 aa).

It belongs to the universal ribosomal protein uL18 family. In terms of assembly, part of the 50S ribosomal subunit; part of the 5S rRNA/L5/L18/L25 subcomplex. Contacts the 5S and 23S rRNAs.

This is one of the proteins that bind and probably mediate the attachment of the 5S RNA into the large ribosomal subunit, where it forms part of the central protuberance. The chain is Large ribosomal subunit protein uL18 from Methylibium petroleiphilum (strain ATCC BAA-1232 / LMG 22953 / PM1).